The chain runs to 644 residues: Phosphomethylpyrimidine synthase (644 aa).

Residues Asn236, Met265, Tyr294, His330, 350–352 (SRG), 391–394 (DGLR), and Glu430 contribute to the substrate site. His434 is a Zn(2+) binding site. Tyr457 is a binding site for substrate. His498 is a binding site for Zn(2+). 3 residues coordinate [4Fe-4S] cluster: Cys578, Cys581, and Cys586.

It belongs to the ThiC family. Homodimer. [4Fe-4S] cluster is required as a cofactor.

The catalysed reaction is 5-amino-1-(5-phospho-beta-D-ribosyl)imidazole + S-adenosyl-L-methionine = 4-amino-2-methyl-5-(phosphooxymethyl)pyrimidine + CO + 5'-deoxyadenosine + formate + L-methionine + 3 H(+). It participates in cofactor biosynthesis; thiamine diphosphate biosynthesis. In terms of biological role, catalyzes the synthesis of the hydroxymethylpyrimidine phosphate (HMP-P) moiety of thiamine from aminoimidazole ribotide (AIR) in a radical S-adenosyl-L-methionine (SAM)-dependent reaction. This chain is Phosphomethylpyrimidine synthase, found in Aliivibrio fischeri (strain ATCC 700601 / ES114) (Vibrio fischeri).